The following is a 527-amino-acid chain: Phosphoenolpyruvate carboxykinase (ATP) (527 aa).

Arg54, Tyr190, and Lys196 together coordinate substrate. ATP contacts are provided by residues Lys196, His215, and 231-239; that span reads GLSGTGKTT. Lys196 and His215 together coordinate Mn(2+). Mn(2+) is bound at residue Asp252. ATP is bound by residues Glu280, Arg317, 436 to 437, and Thr442; that span reads RI. Substrate is bound at residue Arg317.

It belongs to the phosphoenolpyruvate carboxykinase (ATP) family. Requires Mn(2+) as cofactor.

It is found in the cytoplasm. The enzyme catalyses oxaloacetate + ATP = phosphoenolpyruvate + ADP + CO2. Its pathway is carbohydrate biosynthesis; gluconeogenesis. Functionally, involved in the gluconeogenesis. Catalyzes the conversion of oxaloacetate (OAA) to phosphoenolpyruvate (PEP) through direct phosphoryl transfer between the nucleoside triphosphate and OAA. The sequence is that of Phosphoenolpyruvate carboxykinase (ATP) from Oceanobacillus iheyensis (strain DSM 14371 / CIP 107618 / JCM 11309 / KCTC 3954 / HTE831).